Here is a 930-residue protein sequence, read N- to C-terminus: Protocadherin gamma-B6 (930 aa).

Residues 1 to 30 (MGGSCAQRRRAGPRQVLFPLLLPLFYPTLS) form the signal peptide. 6 consecutive Cadherin domains span residues 31–133 (EPIR…APQF), 134–242 (DKKE…PPVF), 243–347 (SRDE…SPEI), 348–452 (IITS…APVF), 453–562 (DQTS…APRV), and 570–675 (DGSA…LPDL). Over 31–691 (EPIRYSIPEE…SDPQAELQFY (661 aa)) the chain is Extracellular. N-linked (GlcNAc...) asparagine glycosylation is found at asparagine 304, asparagine 419, and asparagine 545. Residues 692–712 (LVVALALISVLFLLAVILAIA) form a helical membrane-spanning segment. At 713 to 930 (LRLRRSLSPA…KKKSGKKEKK (218 aa)) the chain is on the cytoplasmic side. Disordered regions lie at residues 791–839 (PHGG…WPNN) and 900–930 (ATLT…KEKK). Residues 800–839 (HPETLTSQAPPNTDWRFSQAQRPGTSGSQNGDDTGTWPNN) are compositionally biased toward polar residues. Positions 920 to 930 (NKKKSGKKEKK) are enriched in basic residues.

The protein resides in the cell membrane. Potential calcium-dependent cell-adhesion protein. May be involved in the establishment and maintenance of specific neuronal connections in the brain. The chain is Protocadherin gamma-B6 (PCDHGB6) from Homo sapiens (Human).